Consider the following 308-residue polypeptide: Protoheme IX farnesyltransferase (308 aa).

Helical transmembrane passes span 20–40 (LLAY…VTAI), 50–70 (AIHP…AAGA), 102–122 (NALA…WCAT), 124–144 (LLAG…YTLW), 149–169 (TSQN…IGWS), 170–190 (AITG…FFWT), 227–249 (LIYT…WLYG), and 288–308 (YLAV…PTLH).

It belongs to the UbiA prenyltransferase family. Protoheme IX farnesyltransferase subfamily.

The protein localises to the cell membrane. The catalysed reaction is heme b + (2E,6E)-farnesyl diphosphate + H2O = Fe(II)-heme o + diphosphate. It participates in porphyrin-containing compound metabolism; heme O biosynthesis; heme O from protoheme: step 1/1. Its function is as follows. Converts heme B (protoheme IX) to heme O by substitution of the vinyl group on carbon 2 of heme B porphyrin ring with a hydroxyethyl farnesyl side group. This Mycobacterium tuberculosis (strain ATCC 25618 / H37Rv) protein is Protoheme IX farnesyltransferase.